The primary structure comprises 64 residues: Potassium channel toxin kappa-KTx 4.1 (64 aa).

Positions 1 to 26 are cleaved as a signal peptide; that stretch reads MKSTLMTASLLILVVLFIIDYASVYA. Residues 27-38 constitute a propeptide that is removed on maturation; sequence EFIDGEISLERE. 2 cysteine pairs are disulfide-bonded: Cys-43–Cys-61 and Cys-47–Cys-57.

This sequence belongs to the short scorpion toxin superfamily. Potassium channel inhibitor kappa-KTx family. Kappa-KTx 4 subfamily. Expressed by the venom gland.

The protein localises to the secreted. Functionally, potassium channel inhibitor (Kv). This is Potassium channel toxin kappa-KTx 4.1 from Heterometrus petersii (Asian forest scorpion).